A 714-amino-acid chain; its full sequence is MEMASVFTLNVRLDNIAIITIDVPGEKMNTLKAEFASQVRAIIKQLRENKELRGVVFVSAKPDNFIAGADINMIGNCKTAQEAEALARQGQQLMAEIHALPIPVIAAIHGACLGGGLELALACHGRVCTDDPKTVLGLPEVQLGLLPGSGGTQRLPRLIGVSTALEMILTGKQLRAKQALKLGLVDDVVPHSILLEVAVELAKKDRPSSRPLPVRERILAGPLGRALLFKMVGKKTEHKTQGNYPATERILEVVETGLAQGTSSGYDAEARAFGELAMTPQSQALRSIFFASTDVKKDPGSDAPPAPLNSVGILGGGLMGGGIAYVTACKAGLPVRIKDINPQGINHALKYSWDQLEGKVRRRHLKASERDKQLALISGTTDYRGFAHRDLIIEAVFENLELKQQMVAEVEQNCAAHTIFASNTSSLPIGDIAAHATRPEQVIGLHFFSPVEKMPLVEIIPHAGTSAQTIATTVKLAKKQGKTPIVVRDKAGFYVNRILAPYINEAIRMLTEGERVEHIDAALVKFGFPVGPIQLLDEVGIDTGTKIIPVLEAAYGERFSAPANVVSSILNDDRKGRKNGRGFYLYGQKGRKSKKQVDPAIYPLIGAQGQGRLSAPQVAERCVMLMLNEAVRCVDEQVIRSVRDGDIGAVFGIGFPPFLGGPFRYIDSLGAGEVVAIMQRLATQYGSRFTPCERLVEMGARGESFWKTTATDLQ.

An enoyl-CoA hydratase region spans residues 1–190 (MEMASVFTLN…KLGLVDDVVP (190 aa)). The 3-hydroxyacyl-CoA dehydrogenase stretch occupies residues 306-714 (APLNSVGILG…FWKTTATDLQ (409 aa)).

This sequence in the N-terminal section; belongs to the enoyl-CoA hydratase/isomerase family. The protein in the central section; belongs to the 3-hydroxyacyl-CoA dehydrogenase family. As to quaternary structure, heterotetramer of two alpha chains (FadJ) and two beta chains (FadI).

The protein localises to the cytoplasm. The enzyme catalyses a (3S)-3-hydroxyacyl-CoA = a (2E)-enoyl-CoA + H2O. The catalysed reaction is a 4-saturated-(3S)-3-hydroxyacyl-CoA = a (3E)-enoyl-CoA + H2O. It carries out the reaction a (3S)-3-hydroxyacyl-CoA + NAD(+) = a 3-oxoacyl-CoA + NADH + H(+). It catalyses the reaction (3S)-3-hydroxybutanoyl-CoA = (3R)-3-hydroxybutanoyl-CoA. The protein operates within lipid metabolism; fatty acid beta-oxidation. Its function is as follows. Catalyzes the formation of a hydroxyacyl-CoA by addition of water on enoyl-CoA. Also exhibits 3-hydroxyacyl-CoA epimerase and 3-hydroxyacyl-CoA dehydrogenase activities. The sequence is that of Fatty acid oxidation complex subunit alpha from Escherichia coli (strain SE11).